Here is a 297-residue protein sequence, read N- to C-terminus: UDP-N-acetylenolpyruvoylglucosamine reductase (297 aa).

The region spanning 26 to 191 (QTGGPAEYLA…IAATFALKAG (166 aa)) is the FAD-binding PCMH-type domain. R170 is a catalytic residue. The Proton donor role is filled by S220. Residue E290 is part of the active site.

This sequence belongs to the MurB family. FAD is required as a cofactor.

It is found in the cytoplasm. The catalysed reaction is UDP-N-acetyl-alpha-D-muramate + NADP(+) = UDP-N-acetyl-3-O-(1-carboxyvinyl)-alpha-D-glucosamine + NADPH + H(+). Its pathway is cell wall biogenesis; peptidoglycan biosynthesis. In terms of biological role, cell wall formation. The chain is UDP-N-acetylenolpyruvoylglucosamine reductase from Lactobacillus delbrueckii subsp. bulgaricus (strain ATCC 11842 / DSM 20081 / BCRC 10696 / JCM 1002 / NBRC 13953 / NCIMB 11778 / NCTC 12712 / WDCM 00102 / Lb 14).